The sequence spans 394 residues: Phosphoglycerate kinase (394 aa).

Residues Asp-21–Asn-23, Arg-36, His-59–Arg-62, Arg-118, and Arg-151 contribute to the substrate site. Ser-183 bears the Phosphoserine mark. ATP contacts are provided by Lys-201 and Gly-292. Thr-299 is modified (phosphothreonine). ATP contacts are provided by residues Glu-323 and Gly-350 to Ser-353.

The protein belongs to the phosphoglycerate kinase family. As to quaternary structure, monomer.

The protein resides in the cytoplasm. It catalyses the reaction (2R)-3-phosphoglycerate + ATP = (2R)-3-phospho-glyceroyl phosphate + ADP. The protein operates within carbohydrate degradation; glycolysis; pyruvate from D-glyceraldehyde 3-phosphate: step 2/5. The protein is Phosphoglycerate kinase of Anoxybacillus flavithermus (strain DSM 21510 / WK1).